Here is a 428-residue protein sequence, read N- to C-terminus: Serine--tRNA ligase (428 aa).

231–233 (TAE) lines the L-serine pocket. Residue 262–264 (RAE) participates in ATP binding. L-serine is bound at residue E285. 349–352 (EISS) is a binding site for ATP. L-serine is bound at residue S385.

It belongs to the class-II aminoacyl-tRNA synthetase family. Type-1 seryl-tRNA synthetase subfamily. As to quaternary structure, homodimer. The tRNA molecule binds across the dimer.

The protein resides in the cytoplasm. It carries out the reaction tRNA(Ser) + L-serine + ATP = L-seryl-tRNA(Ser) + AMP + diphosphate + H(+). The catalysed reaction is tRNA(Sec) + L-serine + ATP = L-seryl-tRNA(Sec) + AMP + diphosphate + H(+). It participates in aminoacyl-tRNA biosynthesis; selenocysteinyl-tRNA(Sec) biosynthesis; L-seryl-tRNA(Sec) from L-serine and tRNA(Sec): step 1/1. Catalyzes the attachment of serine to tRNA(Ser). Is also able to aminoacylate tRNA(Sec) with serine, to form the misacylated tRNA L-seryl-tRNA(Sec), which will be further converted into selenocysteinyl-tRNA(Sec). This is Serine--tRNA ligase from Methylorubrum populi (strain ATCC BAA-705 / NCIMB 13946 / BJ001) (Methylobacterium populi).